The sequence spans 676 residues: tRNA 5-methylaminomethyl-2-thiouridine biosynthesis bifunctional protein MnmC (676 aa).

The tract at residues 1–241 (MFTVTPAKIY…KRECLCGIKN (241 aa)) is tRNA (mnm(5)s(2)U34)-methyltransferase. Residues 268–676 (IGGGIASLFT…RKLLKGTEIK (409 aa)) form an FAD-dependent cmnm(5)s(2)U34 oxidoreductase region.

In the N-terminal section; belongs to the methyltransferase superfamily. tRNA (mnm(5)s(2)U34)-methyltransferase family. The protein in the C-terminal section; belongs to the DAO family. FAD is required as a cofactor.

The protein resides in the cytoplasm. It carries out the reaction 5-aminomethyl-2-thiouridine(34) in tRNA + S-adenosyl-L-methionine = 5-methylaminomethyl-2-thiouridine(34) in tRNA + S-adenosyl-L-homocysteine + H(+). Catalyzes the last two steps in the biosynthesis of 5-methylaminomethyl-2-thiouridine (mnm(5)s(2)U) at the wobble position (U34) in tRNA. Catalyzes the FAD-dependent demodification of cmnm(5)s(2)U34 to nm(5)s(2)U34, followed by the transfer of a methyl group from S-adenosyl-L-methionine to nm(5)s(2)U34, to form mnm(5)s(2)U34. This is tRNA 5-methylaminomethyl-2-thiouridine biosynthesis bifunctional protein MnmC from Histophilus somni (strain 2336) (Haemophilus somnus).